Here is a 122-residue protein sequence, read N- to C-terminus: RING-box protein 1B (122 aa).

The span at 1–23 (MAEEIEVEETEDFHDMDFNDEEP) shows a compositional bias: acidic residues. The segment at 1–28 (MAEEIEVEETEDFHDMDFNDEEPSCSGG) is disordered. Cysteine 57, cysteine 60, cysteine 68, cysteine 71, cysteine 82, cysteine 89, histidine 91, histidine 94, histidine 96, cysteine 108, and aspartate 111 together coordinate Zn(2+). The RING-type zinc finger occupies 57-112 (CAICRNHIMNLCIECQADPNANQDECTVAWGECNHAFHYHCIARWLKTRLVCPLDN).

It belongs to the RING-box family. Part of a SCF complex consisting of Skpa (SKP1), Cul1, Roc1B and a F-box protein. In terms of tissue distribution, highly expressed in early embryos, and in pupae. Widely expressed in adult males, while it is weakly expressed in adult females.

It is found in the cytoplasm. The protein localises to the nucleus. It functions in the pathway protein modification; protein ubiquitination. Component of the SCF (SKP1-CUL1-F-box protein) E3 ubiquitin ligase complex, which mediates the ubiquitination and subsequent proteasomal degradation of target proteins. Through the RING-type zinc finger, seems to recruit the E2 ubiquitination enzyme to the complex and brings it into close proximity to the substrate. The protein is RING-box protein 1B (Roc1b) of Drosophila melanogaster (Fruit fly).